We begin with the raw amino-acid sequence, 240 residues long: Glutathione S-transferase theta-1 (240 aa).

The 81-residue stretch at 2-82 folds into the GST N-terminal domain; that stretch reads VLELYLDLLS…YLAHKYKVPD (81 aa). Glutathione is bound by residues H40, 53-54, and 66-67; these read RV and ES. Positions 88–222 constitute a GST C-terminal domain; the sequence is DLQARARVDE…VILKVKDCPP (135 aa).

Belongs to the GST superfamily. Theta family. Homodimer. As to expression, in liver, highest expression found in central vein limiting plate hepatocytes. Also expressed in interlobular bile duct epithelial cells. In lung, expressed in club cells and ciliated cells of the bronchiolar epithelium and in type II alveolar cells of the lung parenchyma.

The protein resides in the cytoplasm. It localises to the nucleus. The enzyme catalyses RX + glutathione = an S-substituted glutathione + a halide anion + H(+). In terms of biological role, conjugation of reduced glutathione to a wide number of exogenous and endogenous hydrophobic electrophiles. Also binds steroids, bilirubin, carcinogens and numerous organic anions. Has dichloromethane dehalogenase activity. The polypeptide is Glutathione S-transferase theta-1 (Gstt1) (Mus musculus (Mouse)).